An 838-amino-acid chain; its full sequence is Adenylate cyclase (838 aa).

The interval 1-541 is catalytic; sequence MNYDLFSAQK…DLRLSFPVTV (541 aa). Residues 547-838 are regulatory; that stretch reads EDLTHACEIR…VPFHSRLAMS (292 aa).

It belongs to the adenylyl cyclase class-1 family.

It localises to the cytoplasm. It carries out the reaction ATP = 3',5'-cyclic AMP + diphosphate. The sequence is that of Adenylate cyclase (cya) from Pasteurella multocida (strain Pm70).